A 177-amino-acid polypeptide reads, in one-letter code: Large ribosomal subunit protein uL6 (177 aa).

It belongs to the universal ribosomal protein uL6 family. In terms of assembly, part of the 50S ribosomal subunit.

Functionally, this protein binds to the 23S rRNA, and is important in its secondary structure. It is located near the subunit interface in the base of the L7/L12 stalk, and near the tRNA binding site of the peptidyltransferase center. The sequence is that of Large ribosomal subunit protein uL6 from Bordetella pertussis (strain Tohama I / ATCC BAA-589 / NCTC 13251).